A 190-amino-acid chain; its full sequence is Putative glutathione-dependent formaldehyde-activating enzyme (190 aa).

Positions F19–D165 constitute a CENP-V/GFA domain. Residues C26, C28, C47, C49, C52, C94, and C97 each contribute to the Zn(2+) site.

It belongs to the Gfa family. Requires Zn(2+) as cofactor.

The enzyme catalyses S-(hydroxymethyl)glutathione = glutathione + formaldehyde. The protein operates within one-carbon metabolism; formaldehyde degradation; formate from formaldehyde (glutathione route): step 1/3. Catalyzes the condensation of formaldehyde and glutathione to S-hydroxymethylglutathione. The chain is Putative glutathione-dependent formaldehyde-activating enzyme from Phaeosphaeria nodorum (strain SN15 / ATCC MYA-4574 / FGSC 10173) (Glume blotch fungus).